A 3674-amino-acid polypeptide reads, in one-letter code: Dystrophin (3674 aa).

The segment at 1-236 (MSEVSSDERE…YVTSLFQVLP (236 aa)) is actin-binding. Calponin-homology (CH) domains follow at residues 11 to 115 (DVQK…LHWQ) and 130 to 236 (TNSE…QVLP). Residues 59 to 68 (PKEKGSTRVH) are ANK2- and ANK-3 binding. A compositionally biased stretch (polar residues) spans 306–318 (SDPTRSPFPSQRL). The disordered stretch occupies residues 306-325 (SDPTRSPFPSQRLESPEDKS). Spectrin repeat units lie at residues 335–443 (VNLD…NLHK), 444–552 (VLMD…LLQD), 555–663 (LKWQ…QISQ), 715–824 (EIRK…WLEY), 826–930 (NRII…ELQI), 939–1041 (RYQE…KLEE), 1044–1150 (AKLR…ALKG), 1153–1259 (DKTI…TLEE), 1262–1363 (ACWH…LLEQ), 1364–1459 (SIQS…LFQK), 1464–1564 (EQRL…QLEK), 1567–1672 (KLSR…LLLE), 1675–1774 (KHME…KASI), 1775–1870 (PLKE…KALE), 1873–1975 (HQWY…TVHE), 1988–2097 (EISY…KFDR), 2100–2204 (EKWR…RLEE), 2207–2314 (NILS…EIEA), 2315–2412 (HIKD…LRAK), 2464–2566 (FNRA…QLNE), 2569–2675 (KDST…VLEE), 2678–2791 (RLLQ…HLEA), 2797–2919 (KRLH…RKID), and 2924–3029 (RLQE…QLHE). Residues 1411–1909 (SDLTSHEISL…PEPQDEKKIK (499 aa)) are interaction with SYNM. In terms of domain architecture, WW spans 3044–3077 (TSVQGPWERAISPNKVPYYINHETQTTCWDHPKM). An interaction with SYNM region spans residues 3047 to 3397 (QGPWERAISP…TVLEGDNMET (351 aa)). The ZZ-type; degenerate zinc finger occupies 3297–3353 (KHQAKCNICKECPIIGFRYRSLKHFNYDICQSCFFSGRVAKGHKMHYPMVEYCTPTT). 4 residues coordinate Zn(2+): Cys-3302, Cys-3305, Cys-3326, and Cys-3329. The binds to SNTB1 stretch occupies residues 3455 to 3507 (DDEHLLIQHYCQSLNQDSPLSQPRSPAQILISLESEERGELERILADLEEENR). Ser-3472, Ser-3479, and Ser-3489 each carry phosphoserine. Disordered stretches follow at residues 3517-3543 (KQQH…QSPR) and 3590-3674 (QAEA…EDTM). Composition is skewed to polar residues over residues 3596–3615 (NGTT…SSQP) and 3651–3662 (QLNNSFPSSRGR). A phosphoserine mark is found at Ser-3601, Ser-3602, Ser-3606, Ser-3612, Ser-3613, and Ser-3655.

Interacts with SYNM. Interacts with the syntrophins SNTG1 and SNTG2. Interacts with KRT19. Component of the dystrophin-associated glycoprotein complex which is composed of three subcomplexes: a cytoplasmic complex comprised of DMD (or UTRN), DTNA and a number of syntrophins, such as SNTB1, SNTB2, SNTG1 and SNTG2, the transmembrane dystroglycan complex, and the sarcoglycan-sarcospan complex. Interacts with DAG1 (betaDAG1) with DMD; the interaction is inhibited by phosphorylation on the PPXY motif of DAG1. Interacts with SYNM; SNTA1 and SNTB1. Interacts with CMYA5. Directly interacts with ANK2 and ANK3; these interactions do not interfere with betaDAG1-binding and are necessary for proper localization in muscle cells. Identified in a dystroglycan complex that contains at least PRX, DRP2, UTRN, DMD and DAG1. Interacts with DTNB. Interacts with PGM5; the interaction is direct. Interacts with NOS1; localizes NOS1 to sarcolemma in muscle cells. In terms of tissue distribution, in the retina, expressed in the outer plexiform layer (OPL) and around the blood vessels. Also observed at the vitreal border of the retina corresponding to the inner limiting membrane (ILM). Presynaptically localized in cone pedicles and postsynaptically in bipolar cells (at protein level).

Its subcellular location is the cell membrane. It is found in the sarcolemma. The protein localises to the cytoplasm. It localises to the cytoskeleton. The protein resides in the postsynaptic cell membrane. Its function is as follows. Anchors the extracellular matrix to the cytoskeleton via F-actin. Ligand for dystroglycan. Component of the dystrophin-associated glycoprotein complex which accumulates at the neuromuscular junction (NMJ) and at a variety of synapses in the peripheral and central nervous systems and has a structural function in stabilizing the sarcolemma. Also implicated in signaling events and synaptic transmission. This chain is Dystrophin, found in Sus scrofa (Pig).